Here is a 164-residue protein sequence, read N- to C-terminus: Phosphopantetheine adenylyltransferase (164 aa).

Serine 11 lines the substrate pocket. Residues 11 to 12 (SF) and histidine 19 contribute to the ATP site. Lysine 43, leucine 75, and arginine 89 together coordinate substrate. ATP is bound by residues 90-92 (GLR), glutamate 100, and 125-131 (YGYLSSS).

The protein belongs to the bacterial CoaD family. As to quaternary structure, homohexamer. Mg(2+) serves as cofactor.

It is found in the cytoplasm. It catalyses the reaction (R)-4'-phosphopantetheine + ATP + H(+) = 3'-dephospho-CoA + diphosphate. Its pathway is cofactor biosynthesis; coenzyme A biosynthesis; CoA from (R)-pantothenate: step 4/5. Reversibly transfers an adenylyl group from ATP to 4'-phosphopantetheine, yielding dephospho-CoA (dPCoA) and pyrophosphate. The polypeptide is Phosphopantetheine adenylyltransferase (Geobacter sulfurreducens (strain ATCC 51573 / DSM 12127 / PCA)).